We begin with the raw amino-acid sequence, 311 residues long: Ribosomal RNA small subunit methyltransferase H (311 aa).

Residues 32-34 (AGH), D52, F79, D100, and Q107 contribute to the S-adenosyl-L-methionine site.

Belongs to the methyltransferase superfamily. RsmH family.

It is found in the cytoplasm. The enzyme catalyses cytidine(1402) in 16S rRNA + S-adenosyl-L-methionine = N(4)-methylcytidine(1402) in 16S rRNA + S-adenosyl-L-homocysteine + H(+). Functionally, specifically methylates the N4 position of cytidine in position 1402 (C1402) of 16S rRNA. In Staphylococcus carnosus (strain TM300), this protein is Ribosomal RNA small subunit methyltransferase H.